Here is an 859-residue protein sequence, read N- to C-terminus: Leucine--tRNA ligase (859 aa).

Residues 42–52 (PYPSGKLHMGH) carry the 'HIGH' region motif. The short motif at 618 to 622 (KMSKS) is the 'KMSKS' region element. Lysine 621 serves as a coordination point for ATP.

It belongs to the class-I aminoacyl-tRNA synthetase family.

The protein localises to the cytoplasm. The enzyme catalyses tRNA(Leu) + L-leucine + ATP = L-leucyl-tRNA(Leu) + AMP + diphosphate. In Buchnera aphidicola subsp. Acyrthosiphon pisum (strain APS) (Acyrthosiphon pisum symbiotic bacterium), this protein is Leucine--tRNA ligase.